We begin with the raw amino-acid sequence, 149 residues long: Large ribosomal subunit protein bL9 (149 aa).

This sequence belongs to the bacterial ribosomal protein bL9 family.

Binds to the 23S rRNA. The chain is Large ribosomal subunit protein bL9 from Helicobacter acinonychis (strain Sheeba).